The primary structure comprises 202 residues: Orotate phosphoribosyltransferase (202 aa).

Residues Lys93 and 113 to 121 (EDIITTGGS) contribute to the 5-phospho-alpha-D-ribose 1-diphosphate site. Residues Thr117 and Arg145 each coordinate orotate.

Belongs to the purine/pyrimidine phosphoribosyltransferase family. PyrE subfamily. As to quaternary structure, homodimer. Mg(2+) is required as a cofactor.

The catalysed reaction is orotidine 5'-phosphate + diphosphate = orotate + 5-phospho-alpha-D-ribose 1-diphosphate. It functions in the pathway pyrimidine metabolism; UMP biosynthesis via de novo pathway; UMP from orotate: step 1/2. Functionally, catalyzes the transfer of a ribosyl phosphate group from 5-phosphoribose 1-diphosphate to orotate, leading to the formation of orotidine monophosphate (OMP). The protein is Orotate phosphoribosyltransferase of Campylobacter fetus subsp. fetus (strain 82-40).